The chain runs to 799 residues: Protein translocase subunit SecA (799 aa).

ATP-binding positions include glutamine 85, glycine 103–threonine 107, and aspartate 504.

The protein belongs to the SecA family. Monomer and homodimer. Part of the essential Sec protein translocation apparatus which comprises SecA, SecYEG and auxiliary proteins SecDF. Other proteins may also be involved.

The protein localises to the cell membrane. It localises to the cytoplasm. The enzyme catalyses ATP + H2O + cellular proteinSide 1 = ADP + phosphate + cellular proteinSide 2.. Part of the Sec protein translocase complex. Interacts with the SecYEG preprotein conducting channel. Has a central role in coupling the hydrolysis of ATP to the transfer of proteins into and across the cell membrane, serving as an ATP-driven molecular motor driving the stepwise translocation of polypeptide chains across the membrane. This Lactobacillus acidophilus (strain ATCC 700396 / NCK56 / N2 / NCFM) protein is Protein translocase subunit SecA.